A 1007-amino-acid polypeptide reads, in one-letter code: Glucose transport transcription regulator RGT1 (1007 aa).

Residues 1–11 (MLSALIQNGMS) show a composition bias toward polar residues. Positions 1-115 (MLSALIQNGM…ESRRRSKVSR (115 aa)) are disordered. A compositionally biased stretch (low complexity) spans 21–33 (NNTTNGSSSTTDN). Composition is skewed to polar residues over residues 42-65 (NTEN…SKQD), 74-83 (TPRSINTGAS), and 96-105 (VSSNVSTATT). The zn(2)-C6 fungal-type DNA-binding region spans 117–151 (CDQCRKKKIKCDFIEGHDINPDQSCTGCRKIGEKC). Disordered stretches follow at residues 155 to 224 (RIPL…ATST), 267 to 350 (QRRP…SAIP), 399 to 423 (LQQQ…SNGG), and 462 to 496 (AEVE…QNLP). Polar residues-rich tracts occupy residues 196–206 (SVSNPVNAVNE) and 274–288 (SLAS…GKTN). Over residues 289-303 (QQQPLPSQSQPQSLQ) the composition is skewed to low complexity. Polar residues-rich tracts occupy residues 304–323 (NIGN…TFRN), 329–339 (QPSQDSVSEAG), and 404–419 (SLHS…STGI). A compositionally biased stretch (basic residues) spans 473–489 (QKKRKRSNRSSTSKKGK).

This sequence belongs to the EDS1/RGT1 family.

It is found in the nucleus. Its subcellular location is the cytoplasm. In terms of biological role, glucose-responsive transcription factor that regulates expression of several glucose transporter (HXT) genes in response to glucose. In the absence of glucose, it functions as a transcriptional repressor, whereas high concentrations of glucose cause it to function as a transcriptional activator. In cells growing on low levels of glucose, has a neutral role, neither repressing nor activating transcription. The protein is Glucose transport transcription regulator RGT1 (RGT1) of Kluyveromyces lactis (strain ATCC 8585 / CBS 2359 / DSM 70799 / NBRC 1267 / NRRL Y-1140 / WM37) (Yeast).